The sequence spans 1170 residues: Cellulose synthase-like protein D2 (1170 aa).

2 disordered regions span residues 1 to 75 (MASN…PESG) and 269 to 295 (NEVDNGGGGGGGGGLGGGDGQPAEFTS). The segment covering 10–24 (RHSNSSRLSRMSYSG) has biased composition (low complexity). Residues 273 to 288 (NGGGGGGGGGLGGGDG) show a composition bias toward gly residues. A run of 2 helical transmembrane segments spans residues 311 to 331 (VLSPYRLLILIRMAVLGLFLA) and 341 to 361 (AMWLWGMSVVCELWFGLSWLL). Asp441 is an active-site residue. Residues 527–551 (HAREEIKAMKRQREAALDDVVEAVK) are a coiled coil. Asp873 is an active-site residue. 6 helical membrane-spanning segments follow: residues 955–975 (IFLIVYCFLPALSLFSGQFIV), 981–1001 (TFLTYLLVITLTMCMLAVLEI), 1027–1047 (LAAVLQGLLKVIAGIEISFTL), 1070–1090 (SLMIPPIVIMMVNLIAIAVGF), 1104–1124 (LLGGVFFSFWVLAHLYPFAKG), and 1134–1154 (TIVFVWSGLLAITISLLWVAI).

The protein belongs to the glycosyltransferase 2 family. Plant cellulose synthase-like D subfamily.

The protein resides in the golgi apparatus membrane. In terms of biological role, thought to be a Golgi-localized beta-glycan synthase that polymerize the backbones of noncellulosic polysaccharides (hemicelluloses) of plant cell wall. This is Cellulose synthase-like protein D2 (CSLD2) from Oryza sativa subsp. indica (Rice).